Here is an 85-residue protein sequence, read N- to C-terminus: MAHKKGASSTRNGRDSNAQRLGVKRFGGQTVNAGEILVRQRGTHFHPGANVGRGGDDTLFALAAGSVEFGAKGGRKVVNIVAVEA.

The tract at residues 1–22 (MAHKKGASSTRNGRDSNAQRLG) is disordered. The span at 7–19 (ASSTRNGRDSNAQ) shows a compositional bias: polar residues.

This sequence belongs to the bacterial ribosomal protein bL27 family.

This chain is Large ribosomal subunit protein bL27, found in Leifsonia xyli subsp. xyli (strain CTCB07).